Here is a 1592-residue protein sequence, read N- to C-terminus: Laminin subunit gamma-1 (1592 aa).

Residues 1 to 19 (MRAPVLAVLAVLLLGTVRA) form the signal peptide. The 240-residue stretch at 29 to 268 (SPQRCMPEFV…AISDFAVGGR (240 aa)) folds into the Laminin N-terminal domain. 2 N-linked (GlcNAc...) asparagine glycosylation sites follow: asparagine 43 and asparagine 117. Disulfide bonds link cysteine 269-cysteine 278, cysteine 271-cysteine 288, cysteine 290-cysteine 299, cysteine 302-cysteine 322, cysteine 325-cysteine 334, cysteine 327-cysteine 350, cysteine 353-cysteine 362, cysteine 365-cysteine 378, cysteine 381-cysteine 393, cysteine 383-cysteine 399, cysteine 401-cysteine 410, cysteine 413-cysteine 425, cysteine 428-cysteine 439, cysteine 430-cysteine 446, cysteine 448-cysteine 457, and cysteine 460-cysteine 475. 4 consecutive Laminin EGF-like domains span residues 269–324 (CKCN…ECLP), 325–380 (CNCN…PCHA), 381–427 (CQCN…GCRP), and 428–477 (CACN…GCTP). Positions 504 to 672 (SGVEGWTAQQ…AGPSAPWVEI (169 aa)) constitute a Laminin IV type A domain. N-linked (GlcNAc...) asparagine glycosylation is found at asparagine 559 and asparagine 633. Intrachain disulfides connect cysteine 707-cysteine 716, cysteine 709-cysteine 723, cysteine 725-cysteine 734, cysteine 737-cysteine 753, cysteine 756-cysteine 764, cysteine 758-cysteine 775, cysteine 778-cysteine 787, cysteine 790-cysteine 808, cysteine 811-cysteine 825, cysteine 813-cysteine 832, cysteine 835-cysteine 844, cysteine 847-cysteine 864, cysteine 867-cysteine 881, cysteine 869-cysteine 888, cysteine 890-cysteine 899, cysteine 902-cysteine 915, cysteine 918-cysteine 930, cysteine 920-cysteine 937, cysteine 939-cysteine 948, cysteine 951-cysteine 963, cysteine 966-cysteine 978, cysteine 968-cysteine 984, cysteine 986-cysteine 995, and cysteine 998-cysteine 1011. Laminin EGF-like domains lie at 707–755 (CTCN…DCQP), 756–810 (CPCP…PCRI), 811–866 (CECS…KCRA), 867–917 (CSCN…GCER), 918–965 (CDCH…GCKP), and 966–1013 (CDCD…GCQE). Residues asparagine 1005, asparagine 1041, asparagine 1048, asparagine 1090, asparagine 1144, asparagine 1158, asparagine 1188, asparagine 1206, asparagine 1253, asparagine 1363, and asparagine 1386 are each glycosylated (N-linked (GlcNAc...) asparagine). The domain II and I stretch occupies residues 1013 to 1592 (ECPACYRLVK…CYNTPIIEKP (580 aa)). Residues 1018–1477 (YRLVKDKVNE…DEKMAEMASN (460 aa)) adopt a coiled-coil conformation. A compositionally biased stretch (basic and acidic residues) spans 1456-1472 (NQLKKKQAEAESDEKMA). Residues 1456 to 1489 (NQLKKKQAEAESDEKMAEMASNATKDAESNANNS) form a disordered region. Polar residues predominate over residues 1476-1489 (SNATKDAESNANNS). N-linked (GlcNAc...) asparagine glycosylation is found at asparagine 1477 and asparagine 1487. Residues 1515–1579 (VGQLTVLEKT…ANLEDIKNTL (65 aa)) are a coiled coil.

Laminin is a complex glycoprotein, consisting of three different polypeptide chains (alpha, beta, gamma), which are bound to each other by disulfide bonds into a cross-shaped molecule comprising one long and three short arms with globules at each end.

The protein localises to the secreted. The protein resides in the extracellular space. Its subcellular location is the extracellular matrix. It is found in the basement membrane. Binding to cells via a high affinity receptor, laminin is thought to mediate the attachment, migration and organization of cells into tissues during embryonic development by interacting with other extracellular matrix components. The polypeptide is Laminin subunit gamma-1 (lamc1) (Xenopus tropicalis (Western clawed frog)).